The chain runs to 230 residues: SPbeta prophage-derived putative HNH endonuclease YoqL (230 aa).

The HNH domain occupies 136–188; it reads CSYCGLKIEDHKILFKGTYIQSDFHKEHVDHKGANDISNCIPACKSCNSSKHD.

The protein belongs to the HNH nuclease family.

The chain is SPbeta prophage-derived putative HNH endonuclease YoqL (yoqL) from Bacillus subtilis (strain 168).